We begin with the raw amino-acid sequence, 587 residues long: Tectonic-1 (587 aa).

An N-terminal signal peptide occupies residues 1-22 (MRPRGLPPLLVVLLGCWASVSA). N-linked (GlcNAc...) asparagine glycosylation occurs at asparagine 36. The interval 46 to 68 (GTFPSTRPPGTPRAPGPSSGPRP) is disordered. Residues 51 to 68 (TRPPGTPRAPGPSSGPRP) show a composition bias toward pro residues. N-linked (GlcNAc...) asparagine glycosylation is found at asparagine 295 and asparagine 528.

Belongs to the tectonic family. In terms of assembly, part of the tectonic-like complex (also named B9 complex).

It is found in the cytoplasm. The protein localises to the cytoskeleton. It localises to the cilium basal body. Its subcellular location is the secreted. Functionally, component of the tectonic-like complex, a complex localized at the transition zone of primary cilia and acting as a barrier that prevents diffusion of transmembrane proteins between the cilia and plasma membranes. Regulator of Hedgehog (Hh), required for both activation and inhibition of the Hh pathway in the patterning of the neural tube. During neural tube development, it is required for formation of the most ventral cell types and for full Hh pathway activation. Functions in Hh signal transduction to fully activate the pathway in the presence of high Hh levels and to repress the pathway in the absence of Hh signals. Modulates Hh signal transduction downstream of SMO and RAB23. This chain is Tectonic-1 (TCTN1), found in Homo sapiens (Human).